A 276-amino-acid polypeptide reads, in one-letter code: Rhomboid protease GlpG (276 aa).

6 consecutive transmembrane segments (helical) span residues 94–114 (GPFT…MNVV), 142–162 (ALMH…WYLG), 169–189 (LGSG…GYVQ), 192–212 (FSGP…GYAW), 229–249 (LITF…GMSI), and 250–270 (ANGA…ADTL). Ser-201 serves as the catalytic Nucleophile. His-254 is an active-site residue.

It belongs to the peptidase S54 family.

It localises to the cell inner membrane. It catalyses the reaction Cleaves type-1 transmembrane domains using a catalytic dyad composed of serine and histidine that are contributed by different transmembrane domains.. Rhomboid-type serine protease that catalyzes intramembrane proteolysis. The protein is Rhomboid protease GlpG of Enterobacter sp. (strain 638).